The primary structure comprises 333 residues: Holliday junction branch migration complex subunit RuvB (333 aa).

The segment at 1–181 is large ATPase domain (RuvB-L); it reads MNDILNKEPM…FGISSHMEYY (181 aa). ATP is bound by residues leucine 20, arginine 21, glycine 62, lysine 65, threonine 66, threonine 67, 128-130, arginine 171, tyrosine 181, and arginine 218; that span reads EDF. Residue threonine 66 participates in Mg(2+) binding. The interval 182–252 is small ATPAse domain (RuvB-S); it reads QERDLEEIVK…ITDKALTILD (71 aa). The interval 255-333 is head domain (RuvB-H); that stretch reads AAGLDYIDQK…HLGYVYNEEE (79 aa). DNA-binding residues include arginine 291, arginine 310, and arginine 315.

Belongs to the RuvB family. In terms of assembly, homohexamer. Forms an RuvA(8)-RuvB(12)-Holliday junction (HJ) complex. HJ DNA is sandwiched between 2 RuvA tetramers; dsDNA enters through RuvA and exits via RuvB. An RuvB hexamer assembles on each DNA strand where it exits the tetramer. Each RuvB hexamer is contacted by two RuvA subunits (via domain III) on 2 adjacent RuvB subunits; this complex drives branch migration. In the full resolvosome a probable DNA-RuvA(4)-RuvB(12)-RuvC(2) complex forms which resolves the HJ.

The protein localises to the cytoplasm. It carries out the reaction ATP + H2O = ADP + phosphate + H(+). The RuvA-RuvB-RuvC complex processes Holliday junction (HJ) DNA during genetic recombination and DNA repair, while the RuvA-RuvB complex plays an important role in the rescue of blocked DNA replication forks via replication fork reversal (RFR). RuvA specifically binds to HJ cruciform DNA, conferring on it an open structure. The RuvB hexamer acts as an ATP-dependent pump, pulling dsDNA into and through the RuvAB complex. RuvB forms 2 homohexamers on either side of HJ DNA bound by 1 or 2 RuvA tetramers; 4 subunits per hexamer contact DNA at a time. Coordinated motions by a converter formed by DNA-disengaged RuvB subunits stimulates ATP hydrolysis and nucleotide exchange. Immobilization of the converter enables RuvB to convert the ATP-contained energy into a lever motion, pulling 2 nucleotides of DNA out of the RuvA tetramer per ATP hydrolyzed, thus driving DNA branch migration. The RuvB motors rotate together with the DNA substrate, which together with the progressing nucleotide cycle form the mechanistic basis for DNA recombination by continuous HJ branch migration. Branch migration allows RuvC to scan DNA until it finds its consensus sequence, where it cleaves and resolves cruciform DNA. The polypeptide is Holliday junction branch migration complex subunit RuvB (Lactococcus lactis subsp. cremoris (strain SK11)).